The chain runs to 61 residues: Potassium channel toxin alpha-KTx 6.7 (61 aa).

The signal sequence occupies residues 1-23; that stretch reads MNAKFILLLLVVTTTMLLPDTQG. 4 disulfides stabilise this stretch: Cys29–Cys50, Cys35–Cys55, Cys39–Cys57, and Cys45–Cys60. Cys60 is subject to Cysteine amide.

Belongs to the short scorpion toxin superfamily. Potassium channel inhibitor family. Alpha-KTx 06 subfamily. In terms of tissue distribution, expressed by the venom gland.

Its subcellular location is the secreted. Blocker of voltage-gated potassium channels. This Opistophthalmus carinatus (African yellow leg scorpion) protein is Potassium channel toxin alpha-KTx 6.7.